Reading from the N-terminus, the 367-residue chain is Histidinol-phosphate aminotransferase (367 aa).

Lys221 is subject to N6-(pyridoxal phosphate)lysine.

It belongs to the class-II pyridoxal-phosphate-dependent aminotransferase family. Histidinol-phosphate aminotransferase subfamily. Homodimer. The cofactor is pyridoxal 5'-phosphate.

The catalysed reaction is L-histidinol phosphate + 2-oxoglutarate = 3-(imidazol-4-yl)-2-oxopropyl phosphate + L-glutamate. Its pathway is amino-acid biosynthesis; L-histidine biosynthesis; L-histidine from 5-phospho-alpha-D-ribose 1-diphosphate: step 7/9. This is Histidinol-phosphate aminotransferase from Paracoccus denitrificans (strain Pd 1222).